Consider the following 20-residue polypeptide: Elongation factor Tu (20 aa).

This sequence belongs to the GTP-binding elongation factor family. EF-Tu/EF-1A subfamily. Monomer.

Its subcellular location is the cytoplasm. In terms of biological role, this protein promotes the GTP-dependent binding of aminoacyl-tRNA to the A-site of ribosomes during protein biosynthesis. The sequence is that of Elongation factor Tu (tuf) from Mycoplasmopsis synoviae (Mycoplasma synoviae).